We begin with the raw amino-acid sequence, 410 residues long: NIPA-like protein 3 (410 aa).

The tract at residues 1-24 (MDGAHSAGLQLQPLPPTSGATSTS) is disordered. 9 helical membrane-spanning segments follow: residues 37–57 (NLIG…ALNL), 80–100 (WWLG…SYAF), 105–125 (LIVP…IIFI), 139–159 (VLSF…VTFA), 175–195 (LVSW…CLLL), 206–226 (IVVI…TVKA), 244–264 (PIFY…ATFL), 275–295 (LIAS…GAIF), and 304–324 (ALHI…VFLI). Serine 376 bears the Phosphoserine mark. A disordered region spans residues 389–410 (EEHSSRSTPGVPYRVLEHTKKE).

Belongs to the NIPA family.

The protein resides in the membrane. This Mus musculus (Mouse) protein is NIPA-like protein 3 (Nipal3).